The following is a 109-amino-acid chain: Nucleoid-associated protein CC_0268 (109 aa).

This sequence belongs to the YbaB/EbfC family. Homodimer.

It is found in the cytoplasm. The protein localises to the nucleoid. Functionally, binds to DNA and alters its conformation. May be involved in regulation of gene expression, nucleoid organization and DNA protection. This chain is Nucleoid-associated protein CC_0268, found in Caulobacter vibrioides (strain ATCC 19089 / CIP 103742 / CB 15) (Caulobacter crescentus).